We begin with the raw amino-acid sequence, 708 residues long: Polyribonucleotide nucleotidyltransferase (708 aa).

Mg(2+) is bound by residues Asp488 and Asp494. The KH domain maps to 555 to 615 (PIIKVTKVDP…ENVDKAIELI (61 aa)). One can recognise an S1 motif domain in the interval 625 to 692 (GEVLEGKVTR…DLGRLQFKRV (68 aa)).

Belongs to the polyribonucleotide nucleotidyltransferase family. Mg(2+) serves as cofactor.

The protein localises to the cytoplasm. It catalyses the reaction RNA(n+1) + phosphate = RNA(n) + a ribonucleoside 5'-diphosphate. In terms of biological role, involved in mRNA degradation. Catalyzes the phosphorolysis of single-stranded polyribonucleotides processively in the 3'- to 5'-direction. This is Polyribonucleotide nucleotidyltransferase from Thermotoga sp. (strain RQ2).